A 347-amino-acid chain; its full sequence is ATP-dependent kinase YFH7 (347 aa).

Position 33 to 41 (33 to 41) interacts with ATP; the sequence is GPPGSGKST.

This sequence belongs to the YFH7 family.

ATP-dependent kinase that could be involved in endoplasmic reticulum membrane assembly. The protein is ATP-dependent kinase YFH7 (YFH7) of Lachancea thermotolerans (strain ATCC 56472 / CBS 6340 / NRRL Y-8284) (Yeast).